A 1059-amino-acid polypeptide reads, in one-letter code: Zinc finger protein 628 (1059 aa).

6 C2H2-type zinc fingers span residues 36-58 (YECG…QRTH), 64-86 (YKCP…QRGH), 92-114 (YQCP…RSVH), 120-142 (FICG…LRQH), 148-170 (YPCP…RHVH), and 176-198 (YTCG…QRVH). Position 199 is a phosphothreonine (Thr-199). The C2H2-type 7 zinc finger occupies 204-226 (FRCPLCPKTFTHSSNLLLHQRTH). Disordered regions lie at residues 226-247 (HGAA…REPG), 260-280 (LQPH…PVVP), and 312-351 (EHQP…PAAA). Over residues 228–237 (AAPAPGTASA) the composition is skewed to low complexity. Residues 263–279 (HSPPAPPAPPPPPPPVV) show a composition bias toward pro residues. Residues 323–335 (PQPQEAPAEAPKA) are compositionally biased toward low complexity. Residues 336-351 (DQPPSPLPQPPPPAAA) show a composition bias toward pro residues. 7 consecutive C2H2-type zinc fingers follow at residues 356–378 (FACL…QHSH), 386–408 (FRCG…QQCH), 454–476 (YKCA…LRDH), 482–504 (YQCG…QRVH), 510–532 (FTCG…LRLH), 538–560 (YACG…RHVH), and 566–588 (HACG…QRVH). Residue Thr-589 is modified to Phosphothreonine. C2H2-type zinc fingers lie at residues 594 to 616 (FRCP…QRTH) and 622 to 644 (FTCP…LRTH). Residues 644–658 (HAPANTPPSTTAPAA) are compositionally biased toward low complexity. Residues 644 to 674 (HAPANTPPSTTAPAAGPQPPAPLAAARAPPA) form a disordered region. 4 tandem repeats follow at residues 818–831 (VQLQ…EVTT), 832–842 (VQLQPAQEVTT), 843–853 (VQLQPAQEVTT), and 854–864 (VQLQPAQEVTT). The segment at 818-864 (VQLQPLRPAPEVTTVQLQPAQEVTTVQLQPAQEVTTVQLQPAQEVTT) is 4 X approximate tandem repeats. The interval 943–1059 (DGEQTRLCVQ…LPAVQLVHTF (117 aa)) is interaction with TAF4B.

Interacts with TAF4B.

Its subcellular location is the nucleus. In terms of biological role, transcriptional activator. Binds DNA on GT-box consensus sequence 5'-TTGGTT-3'. Plays a role in spermiogenesis. The chain is Zinc finger protein 628 (ZNF628) from Homo sapiens (Human).